We begin with the raw amino-acid sequence, 266 residues long: Interleukin-1 beta (266 aa).

Residues 1–113 (MATVPEPINE…ETSSDELLCD (113 aa)) constitute a propeptide that is removed on maturation.

Belongs to the IL-1 family. In terms of assembly, monomer. In its precursor form, weakly interacts with full-length MEFV; the mature cytokine does not interact at all. Interacts with integrins ITGAV:ITGBV and ITGA5:ITGB1; integrin-binding is required for IL1B signaling. Interacts with cargo receptor TMED10; the interaction is direct and is required for the secretion of IL1B mature form. Interacts with HSP90AB1; the interaction facilitates cargo translocation into the ERGIC. Interacts with HSP90B1; the interaction facilitates cargo translocation into the ERGIC.

The protein localises to the cytoplasm. It localises to the cytosol. Its subcellular location is the secreted. It is found in the lysosome. The protein resides in the extracellular exosome. Functionally, potent pro-inflammatory cytokine. Initially discovered as the major endogenous pyrogen, induces prostaglandin synthesis, neutrophil influx and activation, T-cell activation and cytokine production, B-cell activation and antibody production, and fibroblast proliferation and collagen production. Promotes Th17 differentiation of T-cells. Synergizes with IL12/interleukin-12 to induce IFNG synthesis from T-helper 1 (Th1) cells. Plays a role in angiogenesis by inducing VEGF production synergistically with TNF and IL6. Involved in transduction of inflammation downstream of pyroptosis: its mature form is specifically released in the extracellular milieu by passing through the gasdermin-D (GSDMD) pore. This chain is Interleukin-1 beta (IL1B), found in Ovis aries (Sheep).